Reading from the N-terminus, the 349-residue chain is Phospho-N-acetylmuramoyl-pentapeptide-transferase (349 aa).

The next 10 helical transmembrane spans lie at 13 to 33 (LFFS…SLGV), 69 to 89 (GGGV…LPWG), 91 to 111 (FSTW…WYDD), 129 to 149 (FMVQ…IYGS), 165 to 185 (LSLP…VAII), 197 to 217 (LDGL…FVAL), 228 to 248 (VAYV…YNGF), 252 to 272 (LFMG…CAVM), 278 to 298 (ILVV…LQVL), and 327 to 347 (IVMR…AAVL).

The protein belongs to the glycosyltransferase 4 family. MraY subfamily. Requires Mg(2+) as cofactor.

The protein localises to the cell inner membrane. It catalyses the reaction UDP-N-acetyl-alpha-D-muramoyl-L-alanyl-gamma-D-glutamyl-meso-2,6-diaminopimeloyl-D-alanyl-D-alanine + di-trans,octa-cis-undecaprenyl phosphate = di-trans,octa-cis-undecaprenyl diphospho-N-acetyl-alpha-D-muramoyl-L-alanyl-D-glutamyl-meso-2,6-diaminopimeloyl-D-alanyl-D-alanine + UMP. Its pathway is cell wall biogenesis; peptidoglycan biosynthesis. Its function is as follows. Catalyzes the initial step of the lipid cycle reactions in the biosynthesis of the cell wall peptidoglycan: transfers peptidoglycan precursor phospho-MurNAc-pentapeptide from UDP-MurNAc-pentapeptide onto the lipid carrier undecaprenyl phosphate, yielding undecaprenyl-pyrophosphoryl-MurNAc-pentapeptide, known as lipid I. In Chlamydia pneumoniae (Chlamydophila pneumoniae), this protein is Phospho-N-acetylmuramoyl-pentapeptide-transferase.